Consider the following 466-residue polypeptide: SVGFKAGVKEYKLTYYTPTYETKDTDILAAFRVTPQPGVPPEEAGAAVAXESSTGTWTTVWTDGLTSLDRYKGRCYHIEPVAGEENQFIAYVAYPLDLFEEGSVTNMFTSIVGNVFGFKALRALRLEDLRIPVAYVKTFQGPPHXIQVERDKLNKYGRPLLXCTIKPKLGLSAKNYGRAVYECPRGXXDFTKDDENVNSQPFMRWRDRFLFCAEAXYEAQTETGEIKGHYLNATAGTNEEMMKRAVFARELGVPIVMHDYLTGGFTANTSLAHYCRDNGLLLHIHRAMHAVIDRQKNHGIHFRVLAKALRMSGGDHIHSGTVVGKLEGERDITLGFVDLLRDGFIEKDRSRGIYFTQDWVXLPGVLPVASGGIHVXHMPALTEIFGDDSVLQFGGGTLGHPWXXRPGAVANRVALEACVQARNEGRDLAXEGNEIIREASKWSPELAAACEVWKEIKFEFEAMDTL.

Position 5 is an N6,N6,N6-trimethyllysine (K5). N114 and T164 together coordinate substrate. Catalysis depends on K166, which acts as the Proton acceptor. K168 serves as a coordination point for substrate. Mg(2+) contacts are provided by K192, D194, and E195. Residue K192 is modified to N6-carboxylysine. H285 acts as the Proton acceptor in catalysis. 3 residues coordinate substrate: R286, H318, and S370.

The protein belongs to the RuBisCO large chain family. Type I subfamily. Heterohexadecamer of 8 large chains and 8 small chains. The cofactor is Mg(2+).

Its subcellular location is the plastid. The protein resides in the chloroplast. It catalyses the reaction 2 (2R)-3-phosphoglycerate + 2 H(+) = D-ribulose 1,5-bisphosphate + CO2 + H2O. The enzyme catalyses D-ribulose 1,5-bisphosphate + O2 = 2-phosphoglycolate + (2R)-3-phosphoglycerate + 2 H(+). Its function is as follows. RuBisCO catalyzes two reactions: the carboxylation of D-ribulose 1,5-bisphosphate, the primary event in carbon dioxide fixation, as well as the oxidative fragmentation of the pentose substrate in the photorespiration process. Both reactions occur simultaneously and in competition at the same active site. The polypeptide is Ribulose bisphosphate carboxylase large chain (Cornus kousa (Kousa dogwood)).